A 1249-amino-acid polypeptide reads, in one-letter code: DNA repair protein REV1 (1249 aa).

In terms of domain architecture, BRCT spans Thr44–Leu131. The tract at residues Leu253–Lys323 is disordered. The span at Gln259–Thr275 shows a compositional bias: basic and acidic residues. Residues Arg294–Pro319 are compositionally biased toward polar residues. The tract at residues Phe350–Ser360 is interaction with target DNA. Residues Arg355, Asp421–Phe425, Ser508–Arg514, Asn520, and Asp568 contribute to the dCTP site. The region spanning Val417 to Gly651 is the UmuC domain. Asp421 contacts Mg(2+). 2 residues coordinate Mg(2+): Asp568 and Glu569. Interaction with target DNA stretches follow at residues Gly651–Met654 and Arg707–Asn715. Residues Ala1035–Thr1047 are compositionally biased toward basic and acidic residues. Residues Ala1035–Lys1109 form a disordered region. Polar residues predominate over residues His1048 to Pro1057. A Nuclear localization signal motif is present at residues Lys1072–Asn1078. Residues Phe1150–Thr1249 are protein interaction domain; mediates interaction with DNA polymerase zeta.

The protein belongs to the DNA polymerase type-Y family. As to quaternary structure, interacts with FAAP20. Monomer. Interacts with the DNA polymerase zeta which is composed of REV3L and MAD2L2; the interaction with MAD2L2 is direct and requires that REV3L is in its closed conformation. Interacts with POLH, POLI and POLK. Ubiquitous.

The protein resides in the nucleus. Deoxycytidyl transferase involved in DNA repair. Transfers a dCMP residue from dCTP to the 3'-end of a DNA primer in a template-dependent reaction. May assist in the first step in the bypass of abasic lesions by the insertion of a nucleotide opposite the lesion. Required for normal induction of mutations by physical and chemical agents. The chain is DNA repair protein REV1 (Rev1) from Mus musculus (Mouse).